We begin with the raw amino-acid sequence, 862 residues long: DNA gyrase subunit A (862 aa).

Residues 38 to 501 enclose the Topo IIA-type catalytic domain; sequence LPDARDGLKP…DYDDIDVEDL (464 aa). The active-site O-(5'-phospho-DNA)-tyrosine intermediate is the Tyr126. A GyrA-box motif is present at residues 528 to 534; it reads QKRGGKG. The disordered stretch occupies residues 843–862; the sequence is KEESDDDDIVADDTQEQDME. Residues 845–862 show a composition bias toward acidic residues; the sequence is ESDDDDIVADDTQEQDME.

It belongs to the type II topoisomerase GyrA/ParC subunit family. Heterotetramer, composed of two GyrA and two GyrB chains. In the heterotetramer, GyrA contains the active site tyrosine that forms a transient covalent intermediate with DNA, while GyrB binds cofactors and catalyzes ATP hydrolysis.

The protein resides in the cytoplasm. The catalysed reaction is ATP-dependent breakage, passage and rejoining of double-stranded DNA.. A type II topoisomerase that negatively supercoils closed circular double-stranded (ds) DNA in an ATP-dependent manner to modulate DNA topology and maintain chromosomes in an underwound state. Negative supercoiling favors strand separation, and DNA replication, transcription, recombination and repair, all of which involve strand separation. Also able to catalyze the interconversion of other topological isomers of dsDNA rings, including catenanes and knotted rings. Type II topoisomerases break and join 2 DNA strands simultaneously in an ATP-dependent manner. This is DNA gyrase subunit A from Campylobacter fetus.